A 1954-amino-acid chain; its full sequence is MSAFEITVTPSRLKQKKRAEGREPAVVVMAPFSAKAIVQFEDVPITKTARRQVRVLNPSDDDIEVKVMKAIREEHNLSLEWMEHTVPARDEVSMELVWSPVLEVACKETLQLIDNRNFRKEVMIILKSKSNQPVKNPRKFPTVGKTLQLKSPTGAGKTMKSVVSAAVQQKKRMSAAAAPPSKQTWRVTAPSRPAAWAHPPPQAPLVEKNVYKTPQEEPVYISPQPRSLKENLSPMTPGNLLDVIDNLRFTPLTETRGKGQATIFPDNLAAWPTPTLKGNVKSCANDMRPRRITPDDLEDQPATNKTFDVKHSETINISLDTLDCSRIDGQPHTPLNKTTTIVHATHTRALACIHEEEGPSPPRTPTKSAIHDLKRDIKLVGSPLRKYSESMKDLSLLSPQTKYAIQGSMPNLNEMKIRSIEQNRYYQEQQIQIKAKDLNSSSSSEASLAGQQEFLFNHSEILAQSSRFNLHEVGRKSVKGSPVKNPHKRRSHELSFSDAPSNESLYRNETVAISPPKKQRVEDTTLPRSAAPANASARSSSAHAWPHAQSKKFKLAQTMSLMKKPATPRKVRDTSIQPSVKLYDSELYMQTCINPDPFAATTTIDPFLASTMYLDEQAVDRHQADFKKWLNALVSIPADLDADLNNKIDVGKLFNEVRNKELVVAPTKEEQSMNYLTKYRLETLRKAAVELFFSEQMRLPCSKVAVYVNKQALRIRSDRNLHLDVVMQRTILELLLCFNPLWLRLGLEVVFGEKIQMQSNRDIVGLSTFILNRLFRNKCEEQRYSKAYTLTEEYAETIKKHSLQKILFLLLFLDQAKQKRIVKHNPCLFVKKSPHKETKDILLRFSSELLANIGDITRELRRLGYVLQHRQTFLDEFDYAFNNLAVDLRDGVRLTRVMEVILLRDDLTRQLRVPAISRLQRIFNVKLALGALGEANFQLGGDIAAQDIVDGHREKTLSLLWQLIYKFRSPKFHAAATVLQKWWRRHWLHVVIQRRIRHKELMRRHRAATVIQAVFRGHQMRKYVKLFKTERTQAAIILQKFTRRYLAQKQLYQSYHSIITIQRWWRAQQLGRQHRQRFVELREAAIFLQRIWRRRLFAKKLLAAAETARLQRSQKQQAAASYIQMQWRSYQLGRIQRQQFLRQRDLIMFVQRRMRSKWSMLEQRKEFQQLKRAAINIQQRWRAKLSMRKCNADYLALRSSVLKVQAYRKATIQMRIDRNHYYSLRKNVICLQQRLRAIMKMREQRENYLRLRNASILVQKRYRMRQQMIQDRNAYLRTRKCIINVQRRWRATLQMRRERKNYLHLQTTTKRIQIKFRAKREMKKQRAEFLQLKKVTLVVQKRRRALLQMRKERQEYLHLREVTIKLQRRFHAQKSMRFMRAKYRGTQAAVSCLQMHWRNHLLRKRERNSFLQLRQAAITLQRRYRARLNMIKQLKSYAQLKQAAITIQTRYRAKKAMQKQVVLYQKQREAIIKVQRRYRGNLEMRKQIEVYQKQRQAVIRLQKWWRSIRDMRLCKAGYRRIRLSSLSIQRKWRATVQARRQREIFLSTIRKVRLMQAFIRATLLMRQQRREFEMKRRAAVVIQRRFRARCAMLKARQDYQLIQSSVILVQRKFRANRSMKQARQEFVQLRTIAVHLQQKFRGKRLMIEQRNCFQLLRCSMPGFQARARGFMARKRFQALMTPEMMDLIRQKRAAKVIQRYWRGYLIRRRQKHQGLLDIRKRIAQLRQEAKAVNSVRCKVQEAVRFLRGRFIASDALAVLSRLDRLSRTVPHLLMWCSEFMSTFCYGIMAQAIRSEVDKQLIERCSRIILNLARYNSTTVNTFQEGGLVTIAQMLLRWCDKDSEIFNTLCTLIWVFAHCPKKRKIIHDYMTNPEAIYMVRETKKLVARKEKMKQNARKPPPMTSGRYKSQKINFTPCSLPSLEPDFGIIRYSPYTFISSVYAFDTILCKLQIDMF.

A disordered region spans residues 134 to 155; the sequence is VKNPRKFPTVGKTLQLKSPTGA. Phosphoserine is present on residues Ser151 and Ser360. Thr364 carries the post-translational modification Phosphothreonine. 10 positions are modified to phosphoserine: Ser388, Ser390, Ser395, Ser398, Ser491, Ser495, Ser497, Ser501, Ser504, and Ser514. Positions 476-548 are disordered; that stretch reads KSVKGSPVKN…SSSAHAWPHA (73 aa). The span at 498-507 shows a compositional bias: polar residues; that stretch reads DAPSNESLYR. Over residues 528-548 the composition is skewed to low complexity; that stretch reads RSAAPANASARSSSAHAWPHA. Residues 836–968 form the Calponin-homology (CH) domain; it reads KETKDILLRF…LLWQLIYKFR (133 aa). IQ domains follow at residues 1004–1033, 1386–1415, and 1467–1496; these read RHRA…ERTQ, TQAA…QLRQ, and QREA…KQRQ. Residues 1614–1641 are a coiled coil; it reads RANRSMKQARQEFVQLRTIAVHLQQKFR. IQ domains lie at 1656–1687 and 1690–1721; these read LRCS…MMDL and QKRA…IRKR.

Its subcellular location is the cytoplasm. It localises to the nucleus. It is found in the cytoskeleton. The protein localises to the spindle. The protein resides in the microtubule organizing center. Its subcellular location is the perinuclear region. Functionally, required to maintain the structure of the centrosomal microtubule organizing center (MTOC) during mitosis. May have a preferential role in regulating neurogenesis. Required for germ cell mitosis and oocyte differentiation. The protein is Protein abnormal spindle of Drosophila melanogaster (Fruit fly).